The sequence spans 317 residues: uncharacterized protein (317 aa).

The helical transmembrane segment at 11 to 31 (ALLLVIFGSLIVSFAIFFMVL) threads the bilayer. PASTA domains follow at residues 33–100 (NNEI…FISK), 101–174 (GAII…LISK), and 180–241 (DKHV…TIAK).

Its subcellular location is the membrane. This is an uncharacterized protein from Borreliella burgdorferi (strain ATCC 35210 / DSM 4680 / CIP 102532 / B31) (Borrelia burgdorferi).